Consider the following 458-residue polypeptide: Exodeoxyribonuclease 7 large subunit (458 aa).

Belongs to the XseA family. Heterooligomer composed of large and small subunits.

Its subcellular location is the cytoplasm. The catalysed reaction is Exonucleolytic cleavage in either 5'- to 3'- or 3'- to 5'-direction to yield nucleoside 5'-phosphates.. In terms of biological role, bidirectionally degrades single-stranded DNA into large acid-insoluble oligonucleotides, which are then degraded further into small acid-soluble oligonucleotides. The chain is Exodeoxyribonuclease 7 large subunit from Geobacter sp. (strain M21).